The sequence spans 352 residues: RNA 3'-terminal phosphate cyclase (352 aa).

Residues Q100 and 297–301 (HLADQ) contribute to the ATP site. H322 acts as the Tele-AMP-histidine intermediate in catalysis.

This sequence belongs to the RNA 3'-terminal cyclase family. Type 1 subfamily.

It localises to the cytoplasm. It catalyses the reaction a 3'-end 3'-phospho-ribonucleotide-RNA + ATP = a 3'-end 2',3'-cyclophospho-ribonucleotide-RNA + AMP + diphosphate. Catalyzes the conversion of 3'-phosphate to a 2',3'-cyclic phosphodiester at the end of RNA. The mechanism of action of the enzyme occurs in 3 steps: (A) adenylation of the enzyme by ATP; (B) transfer of adenylate to an RNA-N3'P to produce RNA-N3'PP5'A; (C) and attack of the adjacent 2'-hydroxyl on the 3'-phosphorus in the diester linkage to produce the cyclic end product. The biological role of this enzyme is unknown but it is likely to function in some aspects of cellular RNA processing. This Methanosarcina mazei (strain ATCC BAA-159 / DSM 3647 / Goe1 / Go1 / JCM 11833 / OCM 88) (Methanosarcina frisia) protein is RNA 3'-terminal phosphate cyclase.